The chain runs to 283 residues: ATP synthase gamma chain (283 aa).

Belongs to the ATPase gamma chain family. In terms of assembly, F-type ATPases have 2 components, CF(1) - the catalytic core - and CF(0) - the membrane proton channel. CF(1) has five subunits: alpha(3), beta(3), gamma(1), delta(1), epsilon(1). CF(0) has three main subunits: a, b and c.

Its subcellular location is the cell membrane. Produces ATP from ADP in the presence of a proton gradient across the membrane. The gamma chain is believed to be important in regulating ATPase activity and the flow of protons through the CF(0) complex. The protein is ATP synthase gamma chain of Clostridium botulinum (strain Eklund 17B / Type B).